Reading from the N-terminus, the 194-residue chain is Imidazoleglycerol-phosphate dehydratase (194 aa).

The protein belongs to the imidazoleglycerol-phosphate dehydratase family.

It is found in the cytoplasm. It carries out the reaction D-erythro-1-(imidazol-4-yl)glycerol 3-phosphate = 3-(imidazol-4-yl)-2-oxopropyl phosphate + H2O. It functions in the pathway amino-acid biosynthesis; L-histidine biosynthesis; L-histidine from 5-phospho-alpha-D-ribose 1-diphosphate: step 6/9. The sequence is that of Imidazoleglycerol-phosphate dehydratase from Bacillus licheniformis (strain ATCC 14580 / DSM 13 / JCM 2505 / CCUG 7422 / NBRC 12200 / NCIMB 9375 / NCTC 10341 / NRRL NRS-1264 / Gibson 46).